The following is a 370-amino-acid chain: Protein commissureless 1 (370 aa).

Residues 1-136 (MISTTDYPTV…DADMHVIINY (136 aa)) lie on the Extracellular side of the membrane. The tract at residues 108–131 (LRDRSEESGESSWWSQIFGDADMH) is required for vesicular localization. The chain crosses the membrane as a helical span at residues 137-157 (LWIGVVSSLVILSLVFILFSC). The Cytoplasmic segment spans residues 158–370 (YFYRKFRTWK…CASLVVVVAA (213 aa)). 2 short sequence motifs (PY-motif) span residues 220-223 (PPCY) and 229-232 (LPSY). The tract at residues 227–237 (TGLPSYDEALH) is interaction with Nedd4. The disordered stretch occupies residues 287–312 (VEEDKADSSSSTSASASPSSSESSNL). Low complexity predominate over residues 294-312 (SSSSTSASASPSSSESSNL).

Belongs to the commissureless family. Interacts (probably via PY-motifs) with Nedd4 (via WW2 domain). Interacts with Robo. In terms of processing, ubiquitinated by Nedd4; which promotes endocytosis of the comm/robo complex and comm proteasomal degradation. Not ubiquitinated by Nedd4.

The protein localises to the cytoplasmic vesicle membrane. It is found in the cell membrane. Functionally, controls axon guidance across the CNS midline by preventing the delivery of Robo to the growth cone. The sequence is that of Protein commissureless 1 from Drosophila melanogaster (Fruit fly).